A 337-amino-acid polypeptide reads, in one-letter code: WAT1-related protein At1g11460 (337 aa).

A run of 10 helical transmembrane segments spans residues 14–34 (WPPI…NALV), 46–66 (IIGA…AYIL), 83–103 (FISG…GLSY), 107–127 (TVAC…ALIL), 139–159 (AGMI…FLTF), 188–208 (WLLG…WILF), 220–240 (FSST…LSLY), 254–274 (FVIG…TVSV), 284–304 (VFVS…DFII), and 309–329 (LYLG…VFLW). Residues 27 to 157 (MGSVNALVKK…IICISGALFL (131 aa)) enclose the EamA 1 domain. Residues 220 to 328 (FSSTCLMSIF…GTITGLYVFL (109 aa)) form the EamA 2 domain.

Belongs to the drug/metabolite transporter (DMT) superfamily. Plant drug/metabolite exporter (P-DME) (TC 2.A.7.4) family.

The protein localises to the membrane. The protein is WAT1-related protein At1g11460 of Arabidopsis thaliana (Mouse-ear cress).